Reading from the N-terminus, the 91-residue chain is Small ribosomal subunit protein uS19 (91 aa).

It belongs to the universal ribosomal protein uS19 family.

Its function is as follows. Protein S19 forms a complex with S13 that binds strongly to the 16S ribosomal RNA. The polypeptide is Small ribosomal subunit protein uS19 (Synechococcus sp. (strain CC9605)).